The sequence spans 478 residues: Leukotoxin secretion protein D (478 aa).

The Cytoplasmic segment spans residues 1–59 (MKIWLSGIYEFFLRYKNTWAEVWKIRKELDHPNRKKDESEFLPAHLDLIETPVSKKPRL). The chain crosses the membrane as a helical span at residues 60–80 (IAYLIMLFLVVAIVLASVSKV). At 81–478 (EIVATAPGKL…ESVTESLRER (398 aa)) the chain is on the periplasmic side.

The protein belongs to the membrane fusion protein (MFP) (TC 8.A.1) family.

The protein resides in the cell inner membrane. Its function is as follows. Involved in the transport of the Leukotoxin. The chain is Leukotoxin secretion protein D (lktD) from Mannheimia haemolytica (Pasteurella haemolytica).